A 1580-amino-acid chain; its full sequence is Pentafunctional AROM polypeptide (1580 aa).

The segment at 1–381 (MATPTVIKIL…HEQKASVVSN (381 aa)) is 3-dehydroquinate synthase. Residues 44–46 (DTT), 81–84 (EVSK), 114–116 (GGV), and aspartate 119 each bind NAD(+). 7-phospho-2-dehydro-3-deoxy-D-arabino-heptonate is bound at residue arginine 130. 139-140 (TT) is an NAD(+) binding site. 2 residues coordinate 7-phospho-2-dehydro-3-deoxy-D-arabino-heptonate: aspartate 146 and lysine 152. NAD(+) is bound at residue lysine 161. Position 162 (asparagine 162) interacts with 7-phospho-2-dehydro-3-deoxy-D-arabino-heptonate. NAD(+) is bound by residues 179-182 (FLNT) and asparagine 190. Position 194 (glutamate 194) interacts with Zn(2+). Residue lysine 247 participates in 7-phospho-2-dehydro-3-deoxy-D-arabino-heptonate binding. The active-site Proton acceptor; for 3-dehydroquinate synthase activity is the glutamate 257. 7-phospho-2-dehydro-3-deoxy-D-arabino-heptonate is bound by residues 261 to 265 (RNLLN) and histidine 268. Histidine 268 is a binding site for Zn(2+). Residue histidine 272 is the Proton acceptor; for 3-dehydroquinate synthase activity of the active site. Positions 284 and 353 each coordinate 7-phospho-2-dehydro-3-deoxy-D-arabino-heptonate. A Zn(2+)-binding site is contributed by histidine 284. Positions 394–838 (VSPGVPHALE…WDTLAQLFKA (445 aa)) are EPSP synthase. Catalysis depends on cysteine 820, which acts as the For EPSP synthase activity. Positions 857-1048 (ASLFIIGMRG…KKKPQSFFVS (192 aa)) are shikimate kinase. 863 to 870 (GMRGAGKT) provides a ligand contact to ATP. Residues 1049–1269 (LTLPDLRPSV…AAPGQLSAKE (221 aa)) are 3-dehydroquinase. Histidine 1172 acts as the Proton acceptor; for 3-dehydroquinate dehydratase activity in catalysis. Catalysis depends on lysine 1200, which acts as the Schiff-base intermediate with substrate; for 3-dehydroquinate dehydratase activity. The shikimate dehydrogenase stretch occupies residues 1282-1580 (SKKFAIVGKP…AAVMNADADI (299 aa)).

This sequence in the N-terminal section; belongs to the sugar phosphate cyclases superfamily. Dehydroquinate synthase family. In the 2nd section; belongs to the EPSP synthase family. The protein in the 3rd section; belongs to the shikimate kinase family. It in the 4th section; belongs to the type-I 3-dehydroquinase family. This sequence in the C-terminal section; belongs to the shikimate dehydrogenase family. In terms of assembly, homodimer. Zn(2+) is required as a cofactor.

It is found in the cytoplasm. It catalyses the reaction 7-phospho-2-dehydro-3-deoxy-D-arabino-heptonate = 3-dehydroquinate + phosphate. It carries out the reaction 3-dehydroquinate = 3-dehydroshikimate + H2O. The enzyme catalyses shikimate + NADP(+) = 3-dehydroshikimate + NADPH + H(+). The catalysed reaction is shikimate + ATP = 3-phosphoshikimate + ADP + H(+). It catalyses the reaction 3-phosphoshikimate + phosphoenolpyruvate = 5-O-(1-carboxyvinyl)-3-phosphoshikimate + phosphate. The protein operates within metabolic intermediate biosynthesis; chorismate biosynthesis; chorismate from D-erythrose 4-phosphate and phosphoenolpyruvate: step 2/7. Its pathway is metabolic intermediate biosynthesis; chorismate biosynthesis; chorismate from D-erythrose 4-phosphate and phosphoenolpyruvate: step 3/7. It functions in the pathway metabolic intermediate biosynthesis; chorismate biosynthesis; chorismate from D-erythrose 4-phosphate and phosphoenolpyruvate: step 4/7. It participates in metabolic intermediate biosynthesis; chorismate biosynthesis; chorismate from D-erythrose 4-phosphate and phosphoenolpyruvate: step 5/7. The protein operates within metabolic intermediate biosynthesis; chorismate biosynthesis; chorismate from D-erythrose 4-phosphate and phosphoenolpyruvate: step 6/7. The AROM polypeptide catalyzes 5 consecutive enzymatic reactions in prechorismate polyaromatic amino acid biosynthesis. The chain is Pentafunctional AROM polypeptide from Uncinocarpus reesii (strain UAMH 1704).